Reading from the N-terminus, the 308-residue chain is Cytochrome b (308 aa).

4 consecutive transmembrane segments (helical) span residues 1 to 21, 45 to 66, 81 to 101, and 146 to 166; these read FGSL…LLAT, WLIR…YLHI, WNTG…GYVL, and FFAL…IHFT. His65 lines the heme b pocket. The heme b site is built by His150 and His164. His169 serves as a coordination point for a ubiquinone. Helical transmembrane passes span 194–214, 256–276, and 288–308; these read VKDI…ALFS, LGGV…PFLH, and LSQF…WVGS.

It belongs to the cytochrome b family. The cytochrome bc1 complex contains 11 subunits: 3 respiratory subunits (MT-CYB, CYC1 and UQCRFS1), 2 core proteins (UQCRC1 and UQCRC2) and 6 low-molecular weight proteins (UQCRH/QCR6, UQCRB/QCR7, UQCRQ/QCR8, UQCR10/QCR9, UQCR11/QCR10 and a cleavage product of UQCRFS1). This cytochrome bc1 complex then forms a dimer. Requires heme b as cofactor.

The protein localises to the mitochondrion inner membrane. Functionally, component of the ubiquinol-cytochrome c reductase complex (complex III or cytochrome b-c1 complex) that is part of the mitochondrial respiratory chain. The b-c1 complex mediates electron transfer from ubiquinol to cytochrome c. Contributes to the generation of a proton gradient across the mitochondrial membrane that is then used for ATP synthesis. This Colaptes rupicola (Southern Andean flicker) protein is Cytochrome b (MT-CYB).